We begin with the raw amino-acid sequence, 215 residues long: Sodium channel regulatory subunit beta-3 (215 aa).

An N-terminal signal peptide occupies residues 1-22 (MPAFNRLFPLASLVLIYWVSVC). Residues 23–156 (FPVCVEVPSE…EEAGEDFTSV (134 aa)) lie on the Extracellular side of the membrane. Intrachain disulfides connect C26-C48 and C45-C120. Residues 32-154 (ETEAVQGNPM…VTEEAGEDFT (123 aa)) enclose the Ig-like C2-type domain. N-linked (GlcNAc...) asparagine glycosylation is found at N95, N109, N113, and N121. Residues 157–178 (VSEIMMYILLVFLTLWLLIEMI) form a helical membrane-spanning segment. At 179–215 (YCYRKVSKAEEAAQENASDYLAIPSENKENSAVPVEE) the chain is on the cytoplasmic side.

This sequence belongs to the sodium channel auxiliary subunit SCN3B (TC 8.A.17) family. As to quaternary structure, a voltage-gated sodium (Nav) channel consists of an ion-conducting pore-forming alpha subunit functional on its own that is regulated by one or more beta subunits. Forms homodimers and homotrimers. SCN3B is non-covalently associated with alpha subunits and induces the formation of alpha subunit oligomers, including trimers. Interacts with SCN5A/Nav1.5; regulatory subunit of SCN5A/Nav1.5. Interacts with SCN7A/Nav2.1; probable regulatory subunit of SCN7A/Nav2.1. Interacts with SCN10A; regulatory subunit of SCN10A/Nav1.8. Interacts with NFASC; probably involved in targeting the sodium channels to the nodes of Ranvier. In terms of processing, intramolecular disulfide bonds favor the voltage-gated sodium channel oligomeric complex assembly. Post-translationally, N-glycosylated. As to expression, expressed in the atrium.

It is found in the cell membrane. Functionally, regulatory subunit of multiple voltage-gated sodium (Nav) channels directly mediating the depolarization of excitable membranes. Navs, also called VGSCs (voltage-gated sodium channels) or VDSCs (voltage-dependent sodium channels), operate by switching between closed and open conformations depending on the voltage difference across the membrane. In the open conformation they allow Na(+) ions to selectively pass through the pore, along their electrochemical gradient. The influx of Na+ ions provokes membrane depolarization, initiating the propagation of electrical signals throughout cells and tissues. The accessory beta subunits participate in localization and functional modulation of the Nav channels. Modulates the activity of SCN2A/Nav1.2, causing a hyperpolarizing shift in the voltage-dependence of inactivation of the channel and increasing the fraction of channels operating in the fast gating mode. Modulates the activity of SCN5A/Nav1.5. Could also regulate the atypical sodium channel SCN7A/Nav2.1. Modulates the activity of SCN10A/Nav1.8, regulating its oligomerization and accelerating the recovery from inactivation. This chain is Sodium channel regulatory subunit beta-3, found in Homo sapiens (Human).